Consider the following 1106-residue polypeptide: Probable ATP-citrate synthase (1106 aa).

Positions 358, 360, and 391 each coordinate citrate. Residues 442 to 459 show a composition bias toward polar residues; sequence APQTTGQFLLSPERNTGG. The segment at 442–478 is disordered; the sequence is APQTTGQFLLSPERNTGGTERAPPSPAANATPTEHPL. ATP-binding positions include 701–721 and 752–778; these read VIRYQNDDRVKMIVLLGEVGG and ITSEVQFGHAGASANALGETAACKNAA. Residue E718 participates in Mg(2+) binding. The active-site Tele-phosphohistidine intermediate is H760. Residue 779 to 789 participates in CoA binding; that stretch reads LRASGALVPES.

It in the N-terminal section; belongs to the succinate/malate CoA ligase beta subunit family. In the C-terminal section; belongs to the succinate/malate CoA ligase alpha subunit family. Homotetramer.

It is found in the cytoplasm. The catalysed reaction is oxaloacetate + acetyl-CoA + ADP + phosphate = citrate + ATP + CoA. In terms of biological role, catalyzes the cleavage of citrate into oxaloacetate and acetyl-CoA, the latter serving as common substrate in multiple biochemical reactions in protein, carbohydrate and lipid metabolism. In Caenorhabditis elegans, this protein is Probable ATP-citrate synthase.